A 350-amino-acid polypeptide reads, in one-letter code: RNA 3'-terminal phosphate cyclase (350 aa).

ATP-binding positions include Gln100 and 290 to 294 (FLGDQ). His314 serves as the catalytic Tele-AMP-histidine intermediate.

It belongs to the RNA 3'-terminal cyclase family. Type 1 subfamily.

It is found in the cytoplasm. The catalysed reaction is a 3'-end 3'-phospho-ribonucleotide-RNA + ATP = a 3'-end 2',3'-cyclophospho-ribonucleotide-RNA + AMP + diphosphate. Functionally, catalyzes the conversion of 3'-phosphate to a 2',3'-cyclic phosphodiester at the end of RNA. The mechanism of action of the enzyme occurs in 3 steps: (A) adenylation of the enzyme by ATP; (B) transfer of adenylate to an RNA-N3'P to produce RNA-N3'PP5'A; (C) and attack of the adjacent 2'-hydroxyl on the 3'-phosphorus in the diester linkage to produce the cyclic end product. The biological role of this enzyme is unknown but it is likely to function in some aspects of cellular RNA processing. The protein is RNA 3'-terminal phosphate cyclase of Thermococcus sibiricus (strain DSM 12597 / MM 739).